A 110-amino-acid chain; its full sequence is Large ribosomal subunit protein uL22 (110 aa).

The protein belongs to the universal ribosomal protein uL22 family. Part of the 50S ribosomal subunit.

This protein binds specifically to 23S rRNA; its binding is stimulated by other ribosomal proteins, e.g. L4, L17, and L20. It is important during the early stages of 50S assembly. It makes multiple contacts with different domains of the 23S rRNA in the assembled 50S subunit and ribosome. Its function is as follows. The globular domain of the protein is located near the polypeptide exit tunnel on the outside of the subunit, while an extended beta-hairpin is found that lines the wall of the exit tunnel in the center of the 70S ribosome. This is Large ribosomal subunit protein uL22 from Geobacter metallireducens (strain ATCC 53774 / DSM 7210 / GS-15).